The primary structure comprises 677 residues: DNA ligase (677 aa).

NAD(+) is bound by residues 38-42, 87-88, and E121; these read DYDFD and SL. The active-site N6-AMP-lysine intermediate is the K123. The NAD(+) site is built by R144, E187, K300, and K324. Zn(2+) contacts are provided by C418, C421, C436, and C442. The BRCT domain occupies 601 to 677; the sequence is LINSNFEGLS…ISEEEFEAML (77 aa).

Belongs to the NAD-dependent DNA ligase family. LigA subfamily. Mg(2+) serves as cofactor. The cofactor is Mn(2+).

It catalyses the reaction NAD(+) + (deoxyribonucleotide)n-3'-hydroxyl + 5'-phospho-(deoxyribonucleotide)m = (deoxyribonucleotide)n+m + AMP + beta-nicotinamide D-nucleotide.. Its function is as follows. DNA ligase that catalyzes the formation of phosphodiester linkages between 5'-phosphoryl and 3'-hydroxyl groups in double-stranded DNA using NAD as a coenzyme and as the energy source for the reaction. It is essential for DNA replication and repair of damaged DNA. The polypeptide is DNA ligase (Chlorobium luteolum (strain DSM 273 / BCRC 81028 / 2530) (Pelodictyon luteolum)).